The primary structure comprises 361 residues: Queuine tRNA-ribosyltransferase (361 aa).

Catalysis depends on Asp92, which acts as the Proton acceptor. Residues 92-96 (DSGGF), Asp146, Gln189, and Gly216 each bind substrate. An RNA binding region spans residues 247-253 (GVGKPVD). Asp266 (nucleophile) is an active-site residue. The tract at residues 271 to 275 (TRSGR) is RNA binding; important for wobble base 34 recognition. 4 residues coordinate Zn(2+): Cys304, Cys306, Cys309, and His335.

This sequence belongs to the queuine tRNA-ribosyltransferase family. As to quaternary structure, homodimer. Within each dimer, one monomer is responsible for RNA recognition and catalysis, while the other monomer binds to the replacement base PreQ1. Zn(2+) serves as cofactor.

It carries out the reaction 7-aminomethyl-7-carbaguanine + guanosine(34) in tRNA = 7-aminomethyl-7-carbaguanosine(34) in tRNA + guanine. It functions in the pathway tRNA modification; tRNA-queuosine biosynthesis. Functionally, catalyzes the base-exchange of a guanine (G) residue with the queuine precursor 7-aminomethyl-7-deazaguanine (PreQ1) at position 34 (anticodon wobble position) in tRNAs with GU(N) anticodons (tRNA-Asp, -Asn, -His and -Tyr). Catalysis occurs through a double-displacement mechanism. The nucleophile active site attacks the C1' of nucleotide 34 to detach the guanine base from the RNA, forming a covalent enzyme-RNA intermediate. The proton acceptor active site deprotonates the incoming PreQ1, allowing a nucleophilic attack on the C1' of the ribose to form the product. After dissociation, two additional enzymatic reactions on the tRNA convert PreQ1 to queuine (Q), resulting in the hypermodified nucleoside queuosine (7-(((4,5-cis-dihydroxy-2-cyclopenten-1-yl)amino)methyl)-7-deazaguanosine). The polypeptide is Queuine tRNA-ribosyltransferase (Rickettsia africae (strain ESF-5)).